Here is a 1050-residue protein sequence, read N- to C-terminus: Zinc finger and BTB domain-containing protein 11 (1050 aa).

Positions 143 to 156 (LDSGEESNESEDDL) are enriched in acidic residues. A disordered region spans residues 143 to 173 (LDSGEESNESEDDLSNFTSPPSTASKSSKKK). Positions 157–168 (SNFTSPPSTASK) are enriched in low complexity. The BTB domain maps to 214–282 (CDVTLLIEGE…AYTSVLSFDF (69 aa)). Disordered stretches follow at residues 373–514 (AEQN…EGGY) and 543–563 (LVQRGKKMKQPKRDAKESTEE). Over residues 378-399 (EPEQQPAPQASPEAEASVSPVE) the composition is skewed to low complexity. Composition is skewed to basic and acidic residues over residues 478 to 501 (SKDEDTLTEATEKTDSGPDDDTYR) and 553 to 563 (PKRDAKESTEE). 2 C2H2-type zinc fingers span residues 566–588 (HKCGECGMVFPRRYAFIMHTLKH) and 594–616 (YKCPLCKKQFQYSASLRAHLIRH). The tract at residues 617–641 (TRKEAPTSSSSNSTSTEASGGSSEK) is disordered. Over residues 623 to 638 (TSSSSNSTSTEASGGS) the composition is skewed to low complexity. C2H2-type zinc fingers lie at residues 648–670 (FICSICGRTLPKLYSLRIHMLKH), 676–698 (HACQVCGKTFIYKHGLKLHQSLH), 704–726 (FQCELCVKSFVTKRSLQEHMSIH), 732–754 (YFCSICGKSFHRGSGLSKHLKKH), 763–785 (YHCTQCEKSFFEARDLRQHMNKH), 791–813 (FQCQFCDKCYSWKKDWYSHVKSH), 819–843 (YRCNICGKEFYEKALFRRHVKKATH), 855–877 (RVCDQCGRKFTQLREYRRHMNNH), 883–905 (FECLTCGVAWADARSLKRHVRTH), and 911–934 (YVCPVCSEAYIDARTLRKHMTKFH).

The protein localises to the nucleus. The protein resides in the nucleolus. Functionally, may be involved in transcriptional regulation. The polypeptide is Zinc finger and BTB domain-containing protein 11 (Mus musculus (Mouse)).